The sequence spans 116 residues: Large ribosomal subunit protein bL17 (116 aa).

Belongs to the bacterial ribosomal protein bL17 family. In terms of assembly, part of the 50S ribosomal subunit. Contacts proteins L3 and L32.

Its function is as follows. Binds to the 23S rRNA. The sequence is that of Large ribosomal subunit protein bL17 from Deinococcus radiodurans (strain ATCC 13939 / DSM 20539 / JCM 16871 / CCUG 27074 / LMG 4051 / NBRC 15346 / NCIMB 9279 / VKM B-1422 / R1).